The chain runs to 708 residues: MTKDLNTLVSELPEIYQTIFGHPEWDGDAARDCNQRLDLITEQYDNLSRALGRPLNVLDLGCAQGFFSLSLASKGATIVGIDFQQENINVCRALAEENPDFAAEFRVGRIEEVIAALEEGEFDLAIGLSVFHHIVHLHGIDEVKRLLSRLADVTQAVILELAVKEEPFYWGVSQPDDPRELIEQCAFYRLIGEFDTHLSPVPRPMYLVSNHRVLINDFNQPFQHWQNQPYAGAGLAHKRSRRYFFGEDYVCKFFYYDMPHGILTAEESQRNKYELHNEIKFLTQPPAGFDAPAVLAHGENAQSGWLVMEKLPGRLLSDMLAAGEEIDREKILGSLLRSLAALEKQGFWHDDVRPWNVMVDARQHARLIDFGSIVTTPQDCSWPTNLVQSFFVFVNELFAENKSWNGFWRSAPVHPFNLPQPWSNWLYAVWQEPVERWNFVLLLALFEKKAKLPSAEQQRGATEQWIIAQETVLLELQSRVRNESAGSEALRGQIHTLEQQMAQLQSAQDAFVEKAQQQVEVSHELTWLGENMEQLAALLQTAQAHAQADVQPELPPETAELLQRLEAANREIHHLSNENQQLRQEIEKIHRSRSWRMTKGYRYLGLQIHLLRQYGFVQRCKHFIKRVLRFVFSFMRKHPQVKHTAVNGLHKLGLYQPAYRLYRRMNPLPHSQYQADAQILSQTELQVMHPELLPPEVYEIYLKLTKNK.

The tract at residues 1–210 (MTKDLNTLVS…VPRPMYLVSN (210 aa)) is methyltransferase. S-adenosyl-L-methionine contacts are provided by residues 16 to 17 (YQ), R36, G61, 82 to 87 (DFQQEN), 108 to 111 (GRIE), and L128. The tract at residues 211–459 (HRVLINDFNQ…AKLPSAEQQR (249 aa)) is kinase. ATP is bound by residues P229, H237, 241-243 (RRY), K252, E274, 309-311 (EKL), M358, and D369. Positions 485 to 594 (AGSEALRGQI…EIEKIHRSRS (110 aa)) form a coiled coil. The segment at 601–669 (YRYLGLQIHL…RLYRRMNPLP (69 aa)) is required for membrane-binding. A required for localizing WbdA to the membrane region spans residues 687 to 708 (VMHPELLPPEVYEIYLKLTKNK).

The protein belongs to the WbdD family. In terms of assembly, homotrimer in solution. Interacts with WbdA.

The protein localises to the cell inner membrane. It carries out the reaction 3-O-phospho-alpha-D-Man-(1-&gt;2)-alpha-D-Man-(1-&gt;2)-[alpha-D-Man-(1-&gt;3)-alpha-D-Man-(1-&gt;3)-alpha-D-Man-(1-&gt;2)-alpha-D-Man-(1-&gt;2)](n)-alpha-D-Man-(1-&gt;3)-alpha-D-Man-(1-&gt;3)-alpha-D-Man-(1-&gt;3)-alpha-D-GlcNAc-di-trans,octa-cis-undecaprenyl diphosphate + S-adenosyl-L-methionine = 3-O-methylphospho-alpha-D-Man-(1-&gt;2)-alpha-D-Man-(1-&gt;2)-[alpha-D-Man-(1-&gt;3)-alpha-D-Man-(1-&gt;3)-alpha-D-Man-(1-&gt;2)-alpha-D-Man-(1-&gt;2)](n)-alpha-D-Man-(1-&gt;3)-alpha-D-Man-(1-&gt;3)-alpha-D-Man-(1-&gt;3)-alpha-D-GlcNAc-di-trans,octa-cis-undecaprenyl diphosphate + S-adenosyl-L-homocysteine. The catalysed reaction is alpha-D-Man-(1-&gt;2)-alpha-D-Man-(1-&gt;2)-[alpha-D-Man-(1-&gt;3)-alpha-D-Man-(1-&gt;3)-alpha-D-Man-(1-&gt;2)-alpha-D-Man-(1-&gt;2)](n)-alpha-D-Man-(1-&gt;3)-alpha-D-Man-(1-&gt;3)-alpha-D-Man-(1-&gt;3)-alpha-D-GlcNAc-di-trans,octa-cis-undecaprenyl diphosphate + ATP = 3-O-phospho-alpha-D-Man-(1-&gt;2)-alpha-D-Man-(1-&gt;2)-[alpha-D-Man-(1-&gt;3)-alpha-D-Man-(1-&gt;3)-alpha-D-Man-(1-&gt;2)-alpha-D-Man-(1-&gt;2)](n)-alpha-D-Man-(1-&gt;3)-alpha-D-Man-(1-&gt;3)-alpha-D-Man-(1-&gt;3)-alpha-D-GlcNAc-di-trans,octa-cis-undecaprenyl diphosphate + ADP + H(+). Its pathway is bacterial outer membrane biogenesis; LPS O-antigen biosynthesis. Its function is as follows. Regulates the length of the LPS O-antigen polysaccharide chain. Stops the polymerization of the chain by phosphorylating and then methylating the phosphate on the terminal sugar. This terminal modification is essential for export of the O-antigen across the inner membrane. WbdD is also required for correct localization of the WbdA mannosyltransferase. This Escherichia coli protein is O-antigen chain terminator bifunctional methyltransferase/kinase WbdD.